The chain runs to 424 residues: Glutamyl-tRNA reductase (424 aa).

Residues 50 to 53, Ser98, 103 to 105, and Gln109 contribute to the substrate site; these read TCNR and EDQ. Cys51 serves as the catalytic Nucleophile. 178 to 183 provides a ligand contact to NADP(+); sequence GSGEMG.

The protein belongs to the glutamyl-tRNA reductase family. In terms of assembly, homodimer.

It catalyses the reaction (S)-4-amino-5-oxopentanoate + tRNA(Glu) + NADP(+) = L-glutamyl-tRNA(Glu) + NADPH + H(+). It participates in porphyrin-containing compound metabolism; protoporphyrin-IX biosynthesis; 5-aminolevulinate from L-glutamyl-tRNA(Glu): step 1/2. In terms of biological role, catalyzes the NADPH-dependent reduction of glutamyl-tRNA(Glu) to glutamate 1-semialdehyde (GSA). The protein is Glutamyl-tRNA reductase of Methanoregula boonei (strain DSM 21154 / JCM 14090 / 6A8).